We begin with the raw amino-acid sequence, 231 residues long: Androgen-dependent TFPI-regulating protein (231 aa).

At 1–7 the chain is on the cytoplasmic side; that stretch reads MTRTTTC. The helical transmembrane segment at 8–28 threads the bilayer; that stretch reads VYHFLVWNWYIFLNYYIPLIG. The Extracellular segment spans residues 29 to 45; sequence KDDEKLKEFHDGGRSKY. The chain crosses the membrane as a helical span at residues 46-66; the sequence is LTLLNLLLQAIFFGVACLDDV. Residues 67–85 lie on the Cytoplasmic side of the membrane; it reads LKRIIGRKDIKFITSTRDL. The chain crosses the membrane as a helical span at residues 86–106; that stretch reads LFSTLVFPISTFIFLVFWTLF. Residues 107-123 are Extracellular-facing; that stretch reads YYDRSLIYPKGLDDYFP. Residues 124–144 form a helical membrane-spanning segment; that stretch reads AWLNHAMHTYILLFVLVETIL. Residues 145-154 lie on the Cytoplasmic side of the membrane; that stretch reads RPHHYPSKKL. Residues 155–172 traverse the membrane as a helical segment; it reads GLALLGACNLAYITRVLW. Residues 173–190 are Extracellular-facing; that stretch reads RYSQTGNWVYPVFASLNP. A helical membrane pass occupies residues 191–211; sequence LGIIIFFLVCYILNASIYLVG. At 212–231 the chain is on the cytoplasmic side; that stretch reads EKINHWKWGATVKPLMKKKK.

Belongs to the AIG1 family. Highly expressed in flank organs and weakly in testis and earlobes.

Its subcellular location is the cell membrane. It carries out the reaction 9-hexadecanoyloxy-octadecanoate + H2O = 9-hydroxy-octadecanoate + hexadecanoate + H(+). It catalyses the reaction 12-hexadecanoyloxy-octadecanoate + H2O = 12-hydroxyoctadecanoate + hexadecanoate + H(+). The enzyme catalyses 9-(9Z-hexadecenoyloxy)-octadecanoate + H2O = (9Z)-hexadecenoate + 9-hydroxy-octadecanoate + H(+). The catalysed reaction is 12-(9Z-hexadecenoyloxy)-octadecanoate + H2O = 12-hydroxyoctadecanoate + (9Z)-hexadecenoate + H(+). It carries out the reaction 13-(9Z-hexadecenoyloxy)-octadecanoate + H2O = 13-hydroxy-octadecanoate + (9Z)-hexadecenoate + H(+). It catalyses the reaction 9-octadecanoyloxy-octadecanoate + H2O = 9-hydroxy-octadecanoate + octadecanoate + H(+). The enzyme catalyses 12-octadecanoyloxy-octadecanoate + H2O = 12-hydroxyoctadecanoate + octadecanoate + H(+). The catalysed reaction is 13-octadecanoyloxy-octadecanoate + H2O = 13-hydroxy-octadecanoate + octadecanoate + H(+). It carries out the reaction 9-(9Z-octadecenoyloxy)-octadecanoate + H2O = 9-hydroxy-octadecanoate + (9Z)-octadecenoate + H(+). It catalyses the reaction 12-(9Z-octadecenoyloxy)-octadecanoate + H2O = 12-hydroxyoctadecanoate + (9Z)-octadecenoate + H(+). The enzyme catalyses 13-(9Z-octadecenoyloxy)-octadecanoate + H2O = 13-hydroxy-octadecanoate + (9Z)-octadecenoate + H(+). The catalysed reaction is 5-(9Z-octadecenoyloxy)-octadecanoate + H2O = 5-hydroxy-octadecanoate + (9Z)-octadecenoate + H(+). In terms of biological role, hydrolyzes bioactive fatty-acid esters of hydroxy-fatty acids (FAHFAs), but not other major classes of lipids. Shows a preference for FAHFAs with branching distal from the carboxylate head group of the lipids. Regulates the expression and the cell-associated anticoagulant activity of the inhibitor TFPI in endothelial cells (in vitro). The sequence is that of Androgen-dependent TFPI-regulating protein (ADTRP) from Mesocricetus auratus (Golden hamster).